We begin with the raw amino-acid sequence, 245 residues long: Octanoyltransferase (245 aa).

Residues 54–238 (GEATELVWLL…AFENIFGETR (185 aa)) enclose the BPL/LPL catalytic domain. Substrate-binding positions include 92 to 99 (RGGQLTYH), 167 to 169 (AIG), and 180 to 182 (GIA). Catalysis depends on cysteine 198, which acts as the Acyl-thioester intermediate.

The protein belongs to the LipB family.

It localises to the cytoplasm. It carries out the reaction octanoyl-[ACP] + L-lysyl-[protein] = N(6)-octanoyl-L-lysyl-[protein] + holo-[ACP] + H(+). The protein operates within protein modification; protein lipoylation via endogenous pathway; protein N(6)-(lipoyl)lysine from octanoyl-[acyl-carrier-protein]: step 1/2. Its function is as follows. Catalyzes the transfer of endogenously produced octanoic acid from octanoyl-acyl-carrier-protein onto the lipoyl domains of lipoate-dependent enzymes. Lipoyl-ACP can also act as a substrate although octanoyl-ACP is likely to be the physiological substrate. In Rhodopseudomonas palustris (strain ATCC BAA-98 / CGA009), this protein is Octanoyltransferase.